A 134-amino-acid chain; its full sequence is S-adenosylmethionine decarboxylase proenzyme (134 aa).

Ser-64 (schiff-base intermediate with substrate; via pyruvic acid) is an active-site residue. At Ser-64 the chain carries Pyruvic acid (Ser); by autocatalysis. Residue His-69 is the Proton acceptor; for processing activity of the active site. Cys-84 (proton donor; for catalytic activity) is an active-site residue.

It belongs to the prokaryotic AdoMetDC family. Type 1 subfamily. As to quaternary structure, heterotetramer of two alpha and two beta chains arranged as a dimer of alpha/beta heterodimers. Pyruvate serves as cofactor. Post-translationally, is synthesized initially as an inactive proenzyme. Formation of the active enzyme involves a self-maturation process in which the active site pyruvoyl group is generated from an internal serine residue via an autocatalytic post-translational modification. Two non-identical subunits are generated from the proenzyme in this reaction, and the pyruvate is formed at the N-terminus of the alpha chain, which is derived from the carboxyl end of the proenzyme. The post-translation cleavage follows an unusual pathway, termed non-hydrolytic serinolysis, in which the side chain hydroxyl group of the serine supplies its oxygen atom to form the C-terminus of the beta chain, while the remainder of the serine residue undergoes an oxidative deamination to produce ammonia and the pyruvoyl group blocking the N-terminus of the alpha chain.

The catalysed reaction is S-adenosyl-L-methionine + H(+) = S-adenosyl 3-(methylsulfanyl)propylamine + CO2. The protein operates within amine and polyamine biosynthesis; S-adenosylmethioninamine biosynthesis; S-adenosylmethioninamine from S-adenosyl-L-methionine: step 1/1. In terms of biological role, catalyzes the decarboxylation of S-adenosylmethionine to S-adenosylmethioninamine (dcAdoMet), the propylamine donor required for the synthesis of the polyamines spermine and spermidine from the diamine putrescine. The protein is S-adenosylmethionine decarboxylase proenzyme of Hydrogenobaculum sp. (strain Y04AAS1).